The following is a 316-amino-acid chain: Petrobactin import system permease protein YclN (316 aa).

Helical transmembrane passes span 5-25, 49-69, 94-114, 133-153, 181-201, 224-244, 268-288, and 290-310; these read YLFILLIILAVTSVFIGVEDL, LISIVIAGLSMSICGLIMQQI, LLLFTSASPLIKMLVAFVFAL, IFIPLVGLMLGNIVSSIATFI, LLYLSIPLVIIAYVYADKFTL, LIIVSLITSLVILTVGMLPFL, VLLGAVFVLFCDILGRIIIFP, and EISIGLMVGIIGSGIFLFMLL.

It belongs to the binding-protein-dependent transport system permease family. FecCD subfamily. The complex is composed of two ATP-binding proteins (YclP), two transmembrane proteins (YclN and YclO) and a solute-binding protein (YclQ).

The protein localises to the cell membrane. In terms of biological role, part of the ABC transporter complex YclNOPQ involved in uptake of ferric-petrobactin. Petrobactin is a photoreactive 3,4-catecholate siderophore produced by many members of the B.cereus group, including B.anthracis. Probably responsible for the translocation of the substrate across the membrane. The protein is Petrobactin import system permease protein YclN (yclN) of Bacillus subtilis (strain 168).